The chain runs to 187 residues: Elongation factor P (187 aa).

This sequence belongs to the elongation factor P family.

It localises to the cytoplasm. It participates in protein biosynthesis; polypeptide chain elongation. Its function is as follows. Involved in peptide bond synthesis. Stimulates efficient translation and peptide-bond synthesis on native or reconstituted 70S ribosomes in vitro. Probably functions indirectly by altering the affinity of the ribosome for aminoacyl-tRNA, thus increasing their reactivity as acceptors for peptidyl transferase. This Mycobacterium leprae (strain Br4923) protein is Elongation factor P.